We begin with the raw amino-acid sequence, 381 residues long: 1-deoxy-D-xylulose 5-phosphate reductoisomerase (381 aa).

Positions 10, 11, 12, 13, 36, 37, 38, and 121 each coordinate NADPH. K122 lines the 1-deoxy-D-xylulose 5-phosphate pocket. E123 is an NADPH binding site. Position 147 (D147) interacts with Mn(2+). 1-deoxy-D-xylulose 5-phosphate-binding residues include S148, E149, S173, and H196. E149 serves as a coordination point for Mn(2+). Residue G202 participates in NADPH binding. 4 residues coordinate 1-deoxy-D-xylulose 5-phosphate: S209, N214, K215, and E218. A Mn(2+)-binding site is contributed by E218.

It belongs to the DXR family. The cofactor is Mg(2+). It depends on Mn(2+) as a cofactor.

The enzyme catalyses 2-C-methyl-D-erythritol 4-phosphate + NADP(+) = 1-deoxy-D-xylulose 5-phosphate + NADPH + H(+). Its pathway is isoprenoid biosynthesis; isopentenyl diphosphate biosynthesis via DXP pathway; isopentenyl diphosphate from 1-deoxy-D-xylulose 5-phosphate: step 1/6. Functionally, catalyzes the NADPH-dependent rearrangement and reduction of 1-deoxy-D-xylulose-5-phosphate (DXP) to 2-C-methyl-D-erythritol 4-phosphate (MEP). This Geobacillus sp. (strain WCH70) protein is 1-deoxy-D-xylulose 5-phosphate reductoisomerase.